The sequence spans 136 residues: Beta-hordothionin (136 aa).

Residues 1–27 (MGSKGLKGVMVCLLILGLVLEHVQVEG) form the signal peptide. Disulfide bonds link Cys30–Cys66, Cys31–Cys58, Cys39–Cys56, and Cys43–Cys52. Positions 73-136 (LALVSNSDEP…GDVGLTSLTA (64 aa)) are cleaved as a propeptide — acidic domain.

Belongs to the plant thionin (TC 1.C.44) family. 4 C-C subfamily. Homodimer.

It is found in the secreted. Functionally, thionins are small plant proteins which are toxic to animal cells. They seem to exert their toxic effect at the level of the cell membrane. Their precise function is not known. This Hordeum vulgare (Barley) protein is Beta-hordothionin (THI1.2).